Reading from the N-terminus, the 127-residue chain is Small ribosomal subunit protein eS6 (127 aa).

It belongs to the eukaryotic ribosomal protein eS6 family.

The chain is Small ribosomal subunit protein eS6 from Picrophilus torridus (strain ATCC 700027 / DSM 9790 / JCM 10055 / NBRC 100828 / KAW 2/3).